Consider the following 514-residue polypeptide: L-Threonine dehydratase biosynthetic IlvA (514 aa).

Lysine 62 bears the N6-(pyridoxal phosphate)lysine mark. Pyridoxal 5'-phosphate is bound by residues asparagine 89, 188-192 (GGGGL), and serine 315. ACT-like domains are found at residues 339 to 411 (ALLA…DLSD) and 434 to 504 (RLYS…DESN).

It belongs to the serine/threonine dehydratase family. Homotetramer. Pyridoxal 5'-phosphate is required as a cofactor.

It carries out the reaction L-threonine = 2-oxobutanoate + NH4(+). The protein operates within amino-acid biosynthesis; L-isoleucine biosynthesis; 2-oxobutanoate from L-threonine: step 1/1. Isoleucine allosterically inhibits whereas valine allosterically activates this enzyme. Functionally, catalyzes the anaerobic formation of alpha-ketobutyrate and ammonia from threonine in a two-step reaction. The first step involved a dehydration of threonine and a production of enamine intermediates (aminocrotonate), which tautomerizes to its imine form (iminobutyrate). Both intermediates are unstable and short-lived. The second step is the nonenzymatic hydrolysis of the enamine/imine intermediates to form 2-ketobutyrate and free ammonia. In the low water environment of the cell, the second step is accelerated by RidA. This chain is L-Threonine dehydratase biosynthetic IlvA (ilvA), found in Salmonella typhimurium (strain LT2 / SGSC1412 / ATCC 700720).